Here is a 91-residue protein sequence, read N- to C-terminus: MGYPESISSISNSTGSMGSSISASNLNGFASNDNSISCFDGGCGGGLGGWGGLRGWGGIGGFNGGCEGCGSSNTNIINLDIDIGRSHRRCC.

Belongs to the UPF0512 family.

This Dictyostelium discoideum (Social amoeba) protein is UPF0512 protein M.